Here is a 147-residue protein sequence, read N- to C-terminus: Lipoprotein signal peptidase (147 aa).

4 helical membrane-spanning segments follow: residues 10–30 (ISIF…IKFL), 34–54 (GIVK…GTAF), 59–79 (FLGS…LVYM), and 87–107 (WFIY…RLIY). Catalysis depends on residues Asp-112 and Asp-130. The chain crosses the membrane as a helical span at residues 121–141 (LHWPAFNVADSAISIGIVLFV).

It belongs to the peptidase A8 family.

The protein localises to the cell inner membrane. The catalysed reaction is Release of signal peptides from bacterial membrane prolipoproteins. Hydrolyzes -Xaa-Yaa-Zaa-|-(S,diacylglyceryl)Cys-, in which Xaa is hydrophobic (preferably Leu), and Yaa (Ala or Ser) and Zaa (Gly or Ala) have small, neutral side chains.. It functions in the pathway protein modification; lipoprotein biosynthesis (signal peptide cleavage). Functionally, this protein specifically catalyzes the removal of signal peptides from prolipoproteins. The polypeptide is Lipoprotein signal peptidase (Thermodesulfovibrio yellowstonii (strain ATCC 51303 / DSM 11347 / YP87)).